The following is a 167-amino-acid chain: MLPMITGFMNYGQQTLRAARYIGQGFMITLSHTNRLPVTIQYPYEKLITSERFRGRIHFEFDKCIACEVCVRVCPIDLPVVDWKLETPIRKKRLLNYSIDFGICIFCGNCVEYCPTNCLSMTEEYEFSTYDRHELNYNQIALGRLPISVIDDYTIRTILNSPQIKNG.

4Fe-4S ferredoxin-type domains follow at residues 55–84 and 95–124; these read GRIH…VDWK and LNYS…MTEE. Residues Cys64, Cys67, Cys70, Cys74, Cys104, Cys107, Cys110, and Cys114 each contribute to the [4Fe-4S] cluster site.

The protein belongs to the complex I 23 kDa subunit family. NDH is composed of at least 16 different subunits, 5 of which are encoded in the nucleus. It depends on [4Fe-4S] cluster as a cofactor.

It is found in the plastid. Its subcellular location is the chloroplast thylakoid membrane. It catalyses the reaction a plastoquinone + NADH + (n+1) H(+)(in) = a plastoquinol + NAD(+) + n H(+)(out). The catalysed reaction is a plastoquinone + NADPH + (n+1) H(+)(in) = a plastoquinol + NADP(+) + n H(+)(out). NDH shuttles electrons from NAD(P)H:plastoquinone, via FMN and iron-sulfur (Fe-S) centers, to quinones in the photosynthetic chain and possibly in a chloroplast respiratory chain. The immediate electron acceptor for the enzyme in this species is believed to be plastoquinone. Couples the redox reaction to proton translocation, and thus conserves the redox energy in a proton gradient. The sequence is that of NAD(P)H-quinone oxidoreductase subunit I, chloroplastic from Aethionema cordifolium (Lebanon stonecress).